The primary structure comprises 410 residues: MQKATYCDGSAIYSGLPYQSANGLGYDASQQQYLQALHAESEYHRPACSLQSPGISAGLHTSNEMSEVCQQINGTQATVTDTSDNKQPPTAPSGPSSPSSLNQIPNIDSAAKNPVHVSPTPSTRKHIFPWMKESRQNTKQKSCSIISVESCAGDKSPPGSAASKRARTAYTSAQLVELEKEFHFNRYLCRPRRVEMANLLNLTERQIKIWFQNRRMKYKKDQKGLGMMPSPGAQSPHSPVSLSSGGGGGGGSAYLSSMHSLVNSVTYDSPSPASYNKPQSNTYSLPTSYPPLNNCPPPQKRYQGTGTATPEYDTHHIQGNNNYGTQVQGSPVYVSGGGGYSDSLVGMGASVFGLTHLPHPSQGNIDYNGAITMGNSHQQGACDSNPCTFTDLTPHYSQGRIQEAPKLTHL.

Residues 79–126 form a disordered region; it reads VTDTSDNKQPPTAPSGPSSPSSLNQIPNIDSAAKNPVHVSPTPSTRKH. The Antp-type hexapeptide motif lies at 127 to 132; that stretch reads IFPWMK. Positions 163 to 222 form a DNA-binding region, homeobox; the sequence is SKRARTAYTSAQLVELEKEFHFNRYLCRPRRVEMANLLNLTERQIKIWFQNRRMKYKKDQ. The tract at residues 222 to 249 is disordered; it reads QKGLGMMPSPGAQSPHSPVSLSSGGGGG.

Belongs to the Antp homeobox family.

It localises to the nucleus. Its function is as follows. Sequence-specific transcription factor which is part of a developmental regulatory system that provides cells with specific positional identities on the anterior-posterior axis. This Danio rerio (Zebrafish) protein is Homeobox protein Hox-A3a (hoxa3a).